The sequence spans 183 residues: Peptidoglycan recognition protein 1 (183 aa).

The signal sequence occupies residues 1-17; the sequence is MLFAWAPFPALLGLADS. Cystine bridges form between Cys-18–Cys-142, Cys-34–Cys-79, and Cys-55–Cys-61. One can recognise an N-acetylmuramoyl-L-alanine amidase domain in the interval 40–168; the sequence is KPVRYVVISH…RDVQSTLSPG (129 aa).

This sequence belongs to the N-acetylmuramoyl-L-alanine amidase 2 family. In terms of tissue distribution, expressed in all regions of the brain.

It is found in the secreted. The protein resides in the cytoplasmic granule. Functionally, innate immunity protein that plays several important functions in antimicrobial and antitumor defense systems. Acts as a pattern receptor that binds to murein peptidoglycans (PGN) of Gram-positive bacteria and thus provides bactericidal activity. Forms an equimolar complex with heat shock protein HSPA1A and induces programmed cell death through apoptosis and necroptosis in tumor cell lines by activating the TNFR1 receptor on the target cell membrane. In addition, acts in complex with the Ca(2+)-binding protein S100A4 as a chemoattractant able to induce lymphocyte movement. Mechanistically, this complex acts as a ligand of the chemotactic receptors CCR5 and CXCR3 which are present on the cells of the immune system. Promotes also the activation of lymphocytes that become able to kill virus-infected cells as well as tumor cells by modulating the spectrum of their target-cell specificity. Induction of cytotoxicity on monocyte surface requires interaction with TREM1 receptor. This is Peptidoglycan recognition protein 1 (Pglyrp1) from Rattus norvegicus (Rat).